The chain runs to 468 residues: UDP-N-acetylmuramate--L-alanine ligase (468 aa).

112-118 lines the ATP pocket; the sequence is GMHGKTT.

This sequence belongs to the MurCDEF family.

It localises to the cytoplasm. It catalyses the reaction UDP-N-acetyl-alpha-D-muramate + L-alanine + ATP = UDP-N-acetyl-alpha-D-muramoyl-L-alanine + ADP + phosphate + H(+). The protein operates within cell wall biogenesis; peptidoglycan biosynthesis. Cell wall formation. The protein is UDP-N-acetylmuramate--L-alanine ligase of Koribacter versatilis (strain Ellin345).